The chain runs to 292 residues: Phosphatidylglycerol--prolipoprotein diacylglyceryl transferase (292 aa).

A run of 7 helical transmembrane segments spans residues 21-41 (VSLH…MWLA), 60-80 (LLYA…VLFY), 98-118 (GGMS…VFAH), 124-144 (FFQV…AGRL), 198-218 (SQLY…NLFI), 225-245 (GAVS…VEFF), and 258-278 (ISMG…MMIW). Arginine 143 lines the a 1,2-diacyl-sn-glycero-3-phospho-(1'-sn-glycerol) pocket.

This sequence belongs to the Lgt family.

It localises to the cell inner membrane. The enzyme catalyses L-cysteinyl-[prolipoprotein] + a 1,2-diacyl-sn-glycero-3-phospho-(1'-sn-glycerol) = an S-1,2-diacyl-sn-glyceryl-L-cysteinyl-[prolipoprotein] + sn-glycerol 1-phosphate + H(+). The protein operates within protein modification; lipoprotein biosynthesis (diacylglyceryl transfer). In terms of biological role, catalyzes the transfer of the diacylglyceryl group from phosphatidylglycerol to the sulfhydryl group of the N-terminal cysteine of a prolipoprotein, the first step in the formation of mature lipoproteins. The chain is Phosphatidylglycerol--prolipoprotein diacylglyceryl transferase from Erwinia tasmaniensis (strain DSM 17950 / CFBP 7177 / CIP 109463 / NCPPB 4357 / Et1/99).